The following is a 30-amino-acid chain: Cyclotide mden-G (30 aa).

The cyclopeptide (Gly-Asn) cross-link spans 1–30 (GIPCAESCVYIPCITAALGCSCKNKVCYRN). 3 cysteine pairs are disulfide-bonded: Cys4–Cys20, Cys8–Cys22, and Cys13–Cys27.

This sequence belongs to the cyclotide family. Bracelet subfamily. Post-translationally, this is a cyclic peptide.

In terms of biological role, probably participates in a plant defense mechanism. The chain is Cyclotide mden-G from Melicytus dentatus (Tree violet).